A 38-amino-acid chain; its full sequence is Large ribosomal subunit protein bL36 (38 aa).

This sequence belongs to the bacterial ribosomal protein bL36 family.

The polypeptide is Large ribosomal subunit protein bL36 (Baumannia cicadellinicola subsp. Homalodisca coagulata).